The sequence spans 467 residues: ATP synthase subunit beta (467 aa).

Residue Gly150 to Thr157 coordinates ATP.

It belongs to the ATPase alpha/beta chains family. F-type ATPases have 2 components, CF(1) - the catalytic core - and CF(0) - the membrane proton channel. CF(1) has five subunits: alpha(3), beta(3), gamma(1), delta(1), epsilon(1). CF(0) has three main subunits: a(1), b(2) and c(9-12). The alpha and beta chains form an alternating ring which encloses part of the gamma chain. CF(1) is attached to CF(0) by a central stalk formed by the gamma and epsilon chains, while a peripheral stalk is formed by the delta and b chains.

The protein resides in the cell inner membrane. It catalyses the reaction ATP + H2O + 4 H(+)(in) = ADP + phosphate + 5 H(+)(out). Produces ATP from ADP in the presence of a proton gradient across the membrane. The catalytic sites are hosted primarily by the beta subunits. The protein is ATP synthase subunit beta of Aliivibrio fischeri (strain ATCC 700601 / ES114) (Vibrio fischeri).